The sequence spans 233 residues: U2 small nuclear ribonucleoprotein A' (233 aa).

LRR repeat units follow at residues Lys20–Gln40, Lys42–Phe63, Asn65–Ser86, and His89–Lys110. In terms of domain architecture, LRRCT spans Asn122–Met160.

This sequence belongs to the U2 small nuclear ribonucleoprotein A family. As to quaternary structure, associated with the spliceosome.

It localises to the nucleus. Its function is as follows. Involved in pre-mRNA splicing. In Candida albicans (strain SC5314 / ATCC MYA-2876) (Yeast), this protein is U2 small nuclear ribonucleoprotein A' (LEA1).